The chain runs to 374 residues: Putative serine/threonine-protein kinase ZK507.3 (374 aa).

The region spanning 25–296 (WKVIVELGKG…CKLTLKEPLV (272 aa)) is the Protein kinase domain. Residues 31–39 (LGKGGYGTV) and Lys60 contribute to the ATP site. Residue Asp158 is the Proton acceptor of the active site. Residues 302–374 (NDNESGSTPT…KTRNKKPSRK (73 aa)) are disordered. The span at 306–324 (SGSTPTTSATACSPSSSTG) shows a compositional bias: low complexity. Polar residues predominate over residues 334-343 (IASNIDQKSI). A compositionally biased stretch (basic residues) spans 364-374 (TKTRNKKPSRK).

It belongs to the protein kinase superfamily. Ser/Thr protein kinase family.

It carries out the reaction L-seryl-[protein] + ATP = O-phospho-L-seryl-[protein] + ADP + H(+). The enzyme catalyses L-threonyl-[protein] + ATP = O-phospho-L-threonyl-[protein] + ADP + H(+). The protein is Putative serine/threonine-protein kinase ZK507.3 of Caenorhabditis elegans.